The primary structure comprises 247 residues: MDKILEICAGSLASCIAAQEGGAQRVELCDNLGEGGTTPSYGALAMARGRLNIALHAIIRPRGGDFLYSALEFDAMAHDVEVCRSLGLDGVVLGLLTADGDVDVARTRQLAALAGPMAVTFHRAFDLAREPEQALEDVIAAGCSRLLSSGQAASAPEGAALLARLREQAGGRLTVMPGAGVRPGNIAGLAAASGCIEFHASARGQVASAMRYRRGGVGMGASGVDEYARQETSASQVRALREALDKA.

The protein belongs to the CutC family.

Its subcellular location is the cytoplasm. The protein is PF03932 family protein CutC of Chromobacterium violaceum (strain ATCC 12472 / DSM 30191 / JCM 1249 / CCUG 213 / NBRC 12614 / NCIMB 9131 / NCTC 9757 / MK).